The primary structure comprises 53 residues: UPF0391 membrane protein YtjA (53 aa).

2 consecutive transmembrane segments (helical) span residues 4 to 24 and 30 to 48; these read WGIIFLVIALIAAALGFGGLA and AAKIVFVVGIILFLVSLFM.

Belongs to the UPF0391 family.

Its subcellular location is the cell membrane. This is UPF0391 membrane protein YtjA from Escherichia coli O6:K15:H31 (strain 536 / UPEC).